The sequence spans 273 residues: 2,3,4,5-tetrahydropyridine-2,6-dicarboxylate N-succinyltransferase (273 aa).

Substrate contacts are provided by Arg-104 and Asp-141.

It belongs to the transferase hexapeptide repeat family. As to quaternary structure, homotrimer.

The protein localises to the cytoplasm. The enzyme catalyses (S)-2,3,4,5-tetrahydrodipicolinate + succinyl-CoA + H2O = (S)-2-succinylamino-6-oxoheptanedioate + CoA. Its pathway is amino-acid biosynthesis; L-lysine biosynthesis via DAP pathway; LL-2,6-diaminopimelate from (S)-tetrahydrodipicolinate (succinylase route): step 1/3. This is 2,3,4,5-tetrahydropyridine-2,6-dicarboxylate N-succinyltransferase from Psychrobacter sp. (strain PRwf-1).